We begin with the raw amino-acid sequence, 207 residues long: Small ribosomal subunit protein eS1 (207 aa).

The protein belongs to the eukaryotic ribosomal protein eS1 family.

The polypeptide is Small ribosomal subunit protein eS1 (Methanosarcina barkeri (strain Fusaro / DSM 804)).